The following is a 416-amino-acid chain: Serine hydroxymethyltransferase (416 aa).

Residues leucine 118 and 122–124 (GHL) each bind (6S)-5,6,7,8-tetrahydrofolate. The residue at position 226 (lysine 226) is an N6-(pyridoxal phosphate)lysine. (6S)-5,6,7,8-tetrahydrofolate is bound by residues glutamate 242 and 350–352 (SPF).

Belongs to the SHMT family. Homodimer. Pyridoxal 5'-phosphate serves as cofactor.

The protein resides in the cytoplasm. The catalysed reaction is (6R)-5,10-methylene-5,6,7,8-tetrahydrofolate + glycine + H2O = (6S)-5,6,7,8-tetrahydrofolate + L-serine. Its pathway is one-carbon metabolism; tetrahydrofolate interconversion. The protein operates within amino-acid biosynthesis; glycine biosynthesis; glycine from L-serine: step 1/1. Its function is as follows. Catalyzes the reversible interconversion of serine and glycine with tetrahydrofolate (THF) serving as the one-carbon carrier. This reaction serves as the major source of one-carbon groups required for the biosynthesis of purines, thymidylate, methionine, and other important biomolecules. Also exhibits THF-independent aldolase activity toward beta-hydroxyamino acids, producing glycine and aldehydes, via a retro-aldol mechanism. The sequence is that of Serine hydroxymethyltransferase from Helicobacter pylori (strain Shi470).